Here is a 104-residue protein sequence, read N- to C-terminus: Large ribosomal subunit protein uL23 (104 aa).

Belongs to the universal ribosomal protein uL23 family. As to quaternary structure, part of the 50S ribosomal subunit. Contacts protein L29, and trigger factor when it is bound to the ribosome.

Functionally, one of the early assembly proteins it binds 23S rRNA. One of the proteins that surrounds the polypeptide exit tunnel on the outside of the ribosome. Forms the main docking site for trigger factor binding to the ribosome. In Paraburkholderia phymatum (strain DSM 17167 / CIP 108236 / LMG 21445 / STM815) (Burkholderia phymatum), this protein is Large ribosomal subunit protein uL23.